A 430-amino-acid polypeptide reads, in one-letter code: Tol-Pal system protein TolB (430 aa).

Positions 1–26 (MSLMTKLGLRTLVASCLIAVGGAAHA) are cleaved as a signal peptide.

This sequence belongs to the TolB family. In terms of assembly, the Tol-Pal system is composed of five core proteins: the inner membrane proteins TolA, TolQ and TolR, the periplasmic protein TolB and the outer membrane protein Pal. They form a network linking the inner and outer membranes and the peptidoglycan layer.

Its subcellular location is the periplasm. Its function is as follows. Part of the Tol-Pal system, which plays a role in outer membrane invagination during cell division and is important for maintaining outer membrane integrity. The protein is Tol-Pal system protein TolB of Paraburkholderia phytofirmans (strain DSM 17436 / LMG 22146 / PsJN) (Burkholderia phytofirmans).